Here is a 241-residue protein sequence, read N- to C-terminus: Hybrid peroxiredoxin hyPrx5 (241 aa).

Residues 3–167 enclose the Thioredoxin domain; sequence SMEGKKVPQV…MLKYLAPQHQ (165 aa). Catalysis depends on Cys-49, which acts as the Cysteine sulfenic acid (-SOH) intermediate; for peroxiredoxin activity. Residues 170–241 form the Glutaredoxin domain; that stretch reads ESISIFTKPG…GSDDLEKYFA (72 aa). A disulfide bond links Cys-180 and Cys-183.

The protein in the N-terminal section; belongs to the peroxiredoxin family. Prx5 subfamily. This sequence in the C-terminal section; belongs to the glutaredoxin family. In terms of assembly, homotetramer; interconnecting Prx and Grx domains of different monomers.

It catalyses the reaction a hydroperoxide + 2 glutathione = an alcohol + glutathione disulfide + H2O. Functionally, thiol-specific peroxidase that catalyzes the reduction of hydrogen peroxide and organic hydroperoxides to water and alcohols, respectively. Plays a role in cell protection against oxidative stress by detoxifying peroxides. This is Hybrid peroxiredoxin hyPrx5 (PGdx) from Haemophilus influenzae (strain ATCC 51907 / DSM 11121 / KW20 / Rd).